Reading from the N-terminus, the 246-residue chain is Small ribosomal subunit protein uS2 (246 aa).

The interval 224–246 is disordered; it reads AKQGEESAETEAKEAETTETTTA. Basic and acidic residues predominate over residues 225–239; sequence KQGEESAETEAKEAE.

Belongs to the universal ribosomal protein uS2 family.

The sequence is that of Small ribosomal subunit protein uS2 from Bacillus licheniformis (strain ATCC 14580 / DSM 13 / JCM 2505 / CCUG 7422 / NBRC 12200 / NCIMB 9375 / NCTC 10341 / NRRL NRS-1264 / Gibson 46).